Here is an 887-residue protein sequence, read N- to C-terminus: Replication origin-binding protein (887 aa).

Positions 1–28 are disordered; that stretch reads MPSIGPIPTIPDEGSRGSSATAAPRRAM. Residues 93–258 form the Helicase ATP-binding domain; the sequence is PNNPSSRRVT…ASARGERSVH (166 aa). 106 to 113 is a binding site for ATP; it reads APMGSGKT.

Belongs to the herpesviridae OriBP family. In terms of assembly, homodimer. Interacts with the major DNA-binding protein. Interacts with the DNA helicase/primase complex-associated protein and the polymerase accessory protein.

The protein resides in the host nucleus. Its function is as follows. Functions as a docking protein to recruit essential components of the viral replication machinery to viral DNA origins. In the presence of the major DNA-binding protein, opens dsDNA leading to a conformational change in the origin that facilitates DNA unwinding and subsequent replication. This chain is Replication origin-binding protein, found in Equus caballus (Horse).